Consider the following 79-residue polypeptide: Acyl carrier protein (79 aa).

Positions Ser-2 to Lys-77 constitute a Carrier domain. Ser-37 carries the O-(pantetheine 4'-phosphoryl)serine modification.

It belongs to the acyl carrier protein (ACP) family. In terms of processing, 4'-phosphopantetheine is transferred from CoA to a specific serine of apo-ACP by AcpS. This modification is essential for activity because fatty acids are bound in thioester linkage to the sulfhydryl of the prosthetic group.

It is found in the cytoplasm. The protein operates within lipid metabolism; fatty acid biosynthesis. Carrier of the growing fatty acid chain in fatty acid biosynthesis. The chain is Acyl carrier protein from Acidiphilium cryptum (strain JF-5).